A 389-amino-acid polypeptide reads, in one-letter code: Cytochrome B translational activator CBS2 (389 aa).

It localises to the mitochondrion. Its function is as follows. Translational activator of cytochrome b. The cytochrome b (coB) leader RNA may represent the target sequence for CBS1 and/ or CBS2. This chain is Cytochrome B translational activator CBS2 (CBS2), found in Saccharomyces cerevisiae (strain ATCC 204508 / S288c) (Baker's yeast).